The sequence spans 287 residues: 4-hydroxybenzoate octaprenyltransferase (287 aa).

The next 6 membrane-spanning stretches (helical) occupy residues 41 to 61, 92 to 112, 133 to 153, 160 to 180, 197 to 217, and 267 to 287; these read VSLL…GCAI, VALA…LNAL, FFAI…PMAF, VPLL…AYDT, TSAL…YAVT, and NNWL…AQAF.

It belongs to the UbiA prenyltransferase family. The cofactor is Mg(2+).

The protein resides in the cell inner membrane. The catalysed reaction is all-trans-octaprenyl diphosphate + 4-hydroxybenzoate = 4-hydroxy-3-(all-trans-octaprenyl)benzoate + diphosphate. It participates in cofactor biosynthesis; ubiquinone biosynthesis. Its function is as follows. Catalyzes the prenylation of para-hydroxybenzoate (PHB) with an all-trans polyprenyl group. Mediates the second step in the final reaction sequence of ubiquinone-8 (UQ-8) biosynthesis, which is the condensation of the polyisoprenoid side chain with PHB, generating the first membrane-bound Q intermediate 3-octaprenyl-4-hydroxybenzoate. This chain is 4-hydroxybenzoate octaprenyltransferase, found in Paraburkholderia phymatum (strain DSM 17167 / CIP 108236 / LMG 21445 / STM815) (Burkholderia phymatum).